We begin with the raw amino-acid sequence, 279 residues long: Acyl-[acyl-carrier-protein]--UDP-N-acetylglucosamine O-acyltransferase (279 aa).

Positions 260-279 (AAKEAFQEESVDKEGALVES) are disordered.

Belongs to the transferase hexapeptide repeat family. LpxA subfamily. In terms of assembly, homotrimer.

The protein localises to the cytoplasm. The catalysed reaction is a (3R)-hydroxyacyl-[ACP] + UDP-N-acetyl-alpha-D-glucosamine = a UDP-3-O-[(3R)-3-hydroxyacyl]-N-acetyl-alpha-D-glucosamine + holo-[ACP]. It functions in the pathway glycolipid biosynthesis; lipid IV(A) biosynthesis; lipid IV(A) from (3R)-3-hydroxytetradecanoyl-[acyl-carrier-protein] and UDP-N-acetyl-alpha-D-glucosamine: step 1/6. Its function is as follows. Involved in the biosynthesis of lipid A, a phosphorylated glycolipid that anchors the lipopolysaccharide to the outer membrane of the cell. In Chlamydia abortus (strain DSM 27085 / S26/3) (Chlamydophila abortus), this protein is Acyl-[acyl-carrier-protein]--UDP-N-acetylglucosamine O-acyltransferase.